Here is a 276-residue protein sequence, read N- to C-terminus: Bis(5'-nucleosyl)-tetraphosphatase, symmetrical (276 aa).

It belongs to the Ap4A hydrolase family.

It carries out the reaction P(1),P(4)-bis(5'-adenosyl) tetraphosphate + H2O = 2 ADP + 2 H(+). Functionally, hydrolyzes diadenosine 5',5'''-P1,P4-tetraphosphate to yield ADP. This is Bis(5'-nucleosyl)-tetraphosphatase, symmetrical from Neisseria gonorrhoeae (strain ATCC 700825 / FA 1090).